The sequence spans 242 residues: Phosphatidylethanolamine-binding protein 4 (242 aa).

The first 26 residues, 1–26 (MTMKLVAAALCLSLLAAGLWVGLSLT), serve as a signal peptide directing secretion. The disordered stretch occupies residues 31-50 (EEGKPGGEKPGGGKPGGSGR). A compositionally biased stretch (gly residues) spans 38 to 50 (EKPGGGKPGGSGR). N-linked (GlcNAc...) asparagine glycans are attached at residues Asn-77 and Asn-139. The important for secretion stretch occupies residues 210 to 242 (DPDTSTQFMTQFDEELSSEFGRINDDQEQFNQK).

It belongs to the phosphatidylethanolamine-binding protein family.

The protein localises to the secreted. Its function is as follows. Promotes AKT phosphorylation, suggesting a possible role in the PI3K-AKT signaling pathway. This is Phosphatidylethanolamine-binding protein 4 (Pebp4) from Mus musculus (Mouse).